Consider the following 685-residue polypeptide: Transforming growth factor beta activator LRRC33 (685 aa).

An N-terminal signal peptide occupies residues 1 to 27 (MPVCGCLSVVLSHAVVLLMLVLHSASG). The Extracellular portion of the chain corresponds to 28 to 640 (HPQTFPCRLI…CGFTNNNKES (613 aa)). The LRRNT domain maps to 29–56 (PQTFPCRLIQRVALCSGRQLSVIPDCLP). 7 LRR repeats span residues 57–79 (HETE…LSRY), 80–102 (PFLR…AFIE), 103–129 (SHLL…AFRS), 130–154 (LTQL…LVAN), 155–178 (LSSL…TFRD), 180–201 (HQLK…AFDH), and 202–225 (MKKL…EMTQ). N-linked (GlcNAc...) asparagine glycosylation is present at asparagine 154. N-linked (GlcNAc...) asparagine glycans are attached at residues asparagine 230 and asparagine 244. LRR repeat units follow at residues 248–271 (TFQL…PTNN) and 273–296 (IRTL…TSSN). N-linked (GlcNAc...) asparagine glycosylation is found at asparagine 291, asparagine 296, asparagine 309, asparagine 312, and asparagine 325. 11 LRR repeats span residues 326 to 349 (LSSV…FIKQ), 351 to 373 (PQLY…SEDL), 374 to 397 (PVTI…QTSK), 400 to 423 (LNNL…IFTS), 425 to 447 (PNLN…NYMG), 457 to 480 (MASL…AFKG), 482 to 503 (SLTH…SLKG), 505 to 526 (ANTL…FSPY), 527 to 549 (TNLK…LMAL), 551 to 571 (LKLL…HASL), and 573 to 596 (AKKL…WFRT). N-linked (GlcNAc...) asparagine glycosylation is found at asparagine 402 and asparagine 407. N-linked (GlcNAc...) asparagine glycosylation is present at asparagine 533. One can recognise an LRRCT domain in the interval 597-635 (FGENKGIHVADLSEITCLDLNYRRHKVVLTDAVYCGFTN). A helical transmembrane segment spans residues 641-661 (VVWYILLFVTVSVSIMGISVI). Residues 662-685 (YMLTFKPRMLPRVIKKKCWRPTSY) are Cytoplasmic-facing.

It belongs to the LRRC32/LRRC33 family.

It is found in the cell membrane. Its subcellular location is the endoplasmic reticulum membrane. In terms of biological role, key regulator of transforming growth factor beta-1 (TGFB1) specifically required for microglia function in the nervous system. Required for activation of latent TGF-beta-1 in macrophages and microglia: associates specifically via disulfide bonds with the Latency-associated peptide (LAP), which is the regulatory chain of TGFB1, and regulates integrin-dependent activation of TGF-beta-1. TGF-beta-1 activation mediated by lrrc33/nrros is highly localized: there is little spreading of TGF-beta-1 activated from one microglial cell to neighboring microglia, suggesting the existence of localized and selective activation of TGF-beta-1 by lrrc33/nrros. The sequence is that of Transforming growth factor beta activator LRRC33 from Danio rerio (Zebrafish).